The chain runs to 351 residues: Cyanuric acid amidohydrolase (351 aa).

The segment at 1-96 (MPSLRAHVFR…HWTVFARETV (96 aa)) is RU A. Substrate-binding positions include Arg53 and 77–78 (SG). The tract at residues 103 to 240 (ALAIGVSRTP…HEIIVLGMSA (138 aa)) is RU B. Lys153 is a catalytic residue. Substrate-binding positions include Arg185 and 223–224 (SS). Ser223 functions as the Nucleophile in the catalytic mechanism. The interval 246–351 (LSIDHAVMLD…PVAIIVEKEQ (106 aa)) is RU C. Mg(2+) is bound at residue Glu283. Residues Arg310 and 329–330 (SG) each bind substrate. Mg(2+) is bound by residues Ala332, Gln335, Gly336, Pro337, and Gly340.

It belongs to the cyclic amide hydrolase (CyAH) family. In terms of assembly, homotetramer.

The catalysed reaction is cyanurate + H2O = 1-carboxybiuret + H(+). Its pathway is xenobiotic degradation; atrazine degradation; biuret from cyanurate: step 1/1. With respect to regulation, inhibited by barbituric acid. In terms of biological role, responsible for the hydrolysis of cyanuric acid, an intermediate formed during catabolism of s-triazine based compounds in herbicides such as atrazine and polymers such as melamine. Catalyzes the hydrolytic opening of the s-triazine ring of cyanuric acid (2,4,6-trihydroxy-s-triazine) to yield carbon dioxide and carboxybiuret, which spontaneously decarboxylates to biuret. In Rhizobium leguminosarum bv. trifolii (strain WSM1325), this protein is Cyanuric acid amidohydrolase.